The primary structure comprises 1785 residues: Brefeldin A-inhibited guanine nucleotide-exchange protein 2 (1785 aa).

Met-1 is modified (N-acetylmethionine). Positions 2-224 are DCB; DCB:DCB domain and DCB:HUS domain interaction; the sequence is QESQTKSMFV…KPQSPVIQAA (223 aa). Phosphoserine is present on residues Ser-214, Ser-218, and Ser-227. A disordered region spans residues 232–285; sequence RLKHSQAQSKPTTPEKTDLTNGEHARSDSGKVSTENGDAPRERGSSLSGTDDGA. A Phosphothreonine modification is found at Thr-244. Residues 244–260 are compositionally biased toward basic and acidic residues; that stretch reads TPEKTDLTNGEHARSDS. Phosphoserine occurs at positions 277, 348, and 349. The interval 508–528 is HUS; DCB:HUS domain interaction; the sequence is ADAQCVVDIYVNYDCDLNAAN. Ser-614 carries the phosphoserine modification. Thr-616 carries the post-translational modification Phosphothreonine. Ser-617 is modified (phosphoserine). The residue at position 626 (Thr-626) is a Phosphothreonine. The SEC7 domain maps to 654–785; it reads FNKKPKRGIQ…IIMLTTDLHS (132 aa). Phosphoserine is present on residues Ser-700, Ser-1511, Ser-1513, Ser-1514, Ser-1525, Ser-1528, Ser-1534, and Ser-1782. Residues 1514–1532 are compositionally biased toward polar residues; it reads SIDKNPSERGQSQLSNPTD. A disordered region spans residues 1514-1535; that stretch reads SIDKNPSERGQSQLSNPTDDSW.

In terms of assembly, homodimer. Interacts with ARFGEF1/BIG1; both proteins are probably part of the same or very similar macromolecular complexes. Interacts with PRKAR1A, PRKAR2A, PRKAR1B, PRKAR2B, PPP1CC, PDE3A, TNFRSF1A, MYCBP and EXOC7. Interacts with GABRB1, GABRB2 and GABRB3. Post-translationally, in vitro phosphorylated by PKA reducing its GEF activity and dephosphorylated by phosphatase PP1. As to expression, expressed in placenta, lung, heart, brain, kidney and pancreas.

It localises to the cytoplasm. It is found in the membrane. The protein resides in the golgi apparatus. The protein localises to the perinuclear region. Its subcellular location is the trans-Golgi network. It localises to the endosome. It is found in the cytoskeleton. The protein resides in the microtubule organizing center. The protein localises to the centrosome. Its subcellular location is the cell projection. It localises to the dendrite. It is found in the cytoplasmic vesicle. The protein resides in the synapse. Its activity is regulated as follows. Inhibited by brefeldin A. Functionally, promotes guanine-nucleotide exchange on ARF1 and ARF3 and to a lower extent on ARF5 and ARF6. Promotes the activation of ARF1/ARF5/ARF6 through replacement of GDP with GTP. Involved in the regulation of Golgi vesicular transport. Required for the integrity of the endosomal compartment. Involved in trafficking from the trans-Golgi network (TGN) to endosomes and is required for membrane association of the AP-1 complex and GGA1. Seems to be involved in recycling of the transferrin receptor from recycling endosomes to the plasma membrane. Probably is involved in the exit of GABA(A) receptors from the endoplasmic reticulum. Involved in constitutive release of tumor necrosis factor receptor 1 via exosome-like vesicles; the function seems to involve PKA and specifically PRKAR2B. Proposed to act as A kinase-anchoring protein (AKAP) and may mediate crosstalk between Arf and PKA pathways. The protein is Brefeldin A-inhibited guanine nucleotide-exchange protein 2 (ARFGEF2) of Homo sapiens (Human).